A 121-amino-acid chain; its full sequence is Large ribosomal subunit protein uL14 (121 aa).

It belongs to the universal ribosomal protein uL14 family. In terms of assembly, part of the 50S ribosomal subunit. Forms a cluster with proteins L3 and L19. In the 70S ribosome, L14 and L19 interact and together make contacts with the 16S rRNA in bridges B5 and B8.

Binds to 23S rRNA. Forms part of two intersubunit bridges in the 70S ribosome. The chain is Large ribosomal subunit protein uL14 from Prochlorococcus marinus (strain MIT 9211).